A 478-amino-acid chain; its full sequence is Shikimate biosynthesis protein AroDE (478 aa).

The tract at residues methionine 1 to threonine 208 is 3-dehydroquinate dehydratase. Residues serine 21, glutamate 29–arginine 31, and threonine 55–lysine 57 contribute to the 3-dehydroquinate site. Histidine 110 acts as the Proton donor/acceptor; for 3-dehydroquinate dehydratase activity in catalysis. The active-site Schiff-base intermediate with substrate; for 3-dehydroquinate dehydratase activity is the lysine 133. 3-dehydroquinate-binding residues include arginine 171 and glutamine 196. A shikimate 5-dehydrogenase region spans residues asparagine 209 to alanine 478. Residue serine 226–glycine 228 participates in shikimate binding. The active-site Proton acceptor; for shikimate dehydrogenase activity is the lysine 277. Asparagine 298 and aspartate 313 together coordinate shikimate. NADP(+) is bound by residues glycine 337 to alanine 341, asparagine 360 to threonine 362, and glycine 435. Residue glutamine 442 coordinates shikimate.

It in the N-terminal section; belongs to the type-I 3-dehydroquinase family. In the C-terminal section; belongs to the shikimate dehydrogenase family.

It carries out the reaction 3-dehydroquinate = 3-dehydroshikimate + H2O. It catalyses the reaction shikimate + NADP(+) = 3-dehydroshikimate + NADPH + H(+). It functions in the pathway metabolic intermediate biosynthesis; chorismate biosynthesis; chorismate from D-erythrose 4-phosphate and phosphoenolpyruvate: step 3/7. Its pathway is metabolic intermediate biosynthesis; chorismate biosynthesis; chorismate from D-erythrose 4-phosphate and phosphoenolpyruvate: step 4/7. Its function is as follows. Bifunctional enzyme that catalyzes two sequential steps of the aromatic amino acids biosynthetic pathway. In the first reaction, the AroD domain catalyzes the cis-dehydration of 3-dehydroquinate (DHQ) and introduces the first double bond of the aromatic ring to yield 3-dehydroshikimate; in the second reaction, the AroE domain catalyzes the reversible NADPH linked reduction of 3-dehydroshikimate (DHSA) to yield shikimate (SA). This Chlamydia muridarum (strain MoPn / Nigg) protein is Shikimate biosynthesis protein AroDE.